A 356-amino-acid chain; its full sequence is Histidinol-phosphate aminotransferase (356 aa).

An N6-(pyridoxal phosphate)lysine modification is found at K210.

The protein belongs to the class-II pyridoxal-phosphate-dependent aminotransferase family. Histidinol-phosphate aminotransferase subfamily. Homodimer. It depends on pyridoxal 5'-phosphate as a cofactor.

It carries out the reaction L-histidinol phosphate + 2-oxoglutarate = 3-(imidazol-4-yl)-2-oxopropyl phosphate + L-glutamate. The protein operates within amino-acid biosynthesis; L-histidine biosynthesis; L-histidine from 5-phospho-alpha-D-ribose 1-diphosphate: step 7/9. The chain is Histidinol-phosphate aminotransferase (hisC) from Acetobacter pasteurianus (Acetobacter turbidans).